The following is a 127-amino-acid chain: Large ribosomal subunit protein bL12 (127 aa).

The protein belongs to the bacterial ribosomal protein bL12 family. As to quaternary structure, homodimer. Part of the ribosomal stalk of the 50S ribosomal subunit. Forms a multimeric L10(L12)X complex, where L10 forms an elongated spine to which 2 to 4 L12 dimers bind in a sequential fashion. Binds GTP-bound translation factors.

Forms part of the ribosomal stalk which helps the ribosome interact with GTP-bound translation factors. Is thus essential for accurate translation. The protein is Large ribosomal subunit protein bL12 of Pelobacter propionicus (strain DSM 2379 / NBRC 103807 / OttBd1).